A 237-amino-acid chain; its full sequence is N-(5'-phosphoribosyl)anthranilate isomerase (237 aa).

This sequence belongs to the TrpF family.

It carries out the reaction N-(5-phospho-beta-D-ribosyl)anthranilate = 1-(2-carboxyphenylamino)-1-deoxy-D-ribulose 5-phosphate. Its pathway is amino-acid biosynthesis; L-tryptophan biosynthesis; L-tryptophan from chorismate: step 3/5. In Komagataella pastoris (Yeast), this protein is N-(5'-phosphoribosyl)anthranilate isomerase (TRP1).